The primary structure comprises 147 residues: HTH-type transcriptional regulator MgrA (147 aa).

The HTH marR-type domain occupies 8–139; it reads KEQLCFSLYN…LNRLLGKVIH (132 aa). Positions 55 to 78 form a DNA-binding region, H-T-H motif; it reads VKKVVTELALDTGTVSPLLKRMEQ.

It localises to the cytoplasm. Functionally, regulatory protein involved in autolytic activity, multidrug resistance and virulence. Controls autolysis by inactivating LytM, LytN (autolysins) and SarV (autolysis activator) and activating ArlRS, LrgAB and LytSR (autolysis inhibitors). Acts as a dual regulator for resistance to multiple drugs by inactivating NorB and tet38 and activating NorA. Positively controls the expression of virulence accessory gene regulator (agr) to promote alpha-hemolysin (hla) transcription and down-regulates staphylococcal accessory regulator (sarS), leading to repression of surface protein A (spa). Binds directly to hla promoter to augment its activation. Binds to sarS promoter to down-regulate spa expression. The sequence is that of HTH-type transcriptional regulator MgrA (mgrA) from Staphylococcus aureus (strain NCTC 8325 / PS 47).